Consider the following 90-residue polypeptide: Probable Fe(2+)-trafficking protein (90 aa).

The protein belongs to the Fe(2+)-trafficking protein family. Monomer.

Could be a mediator in iron transactions between iron acquisition and iron-requiring processes, such as synthesis and/or repair of Fe-S clusters in biosynthetic enzymes. The chain is Probable Fe(2+)-trafficking protein from Pectobacterium atrosepticum (strain SCRI 1043 / ATCC BAA-672) (Erwinia carotovora subsp. atroseptica).